A 359-amino-acid polypeptide reads, in one-letter code: Medium-wave-sensitive opsin 1 (359 aa).

Over 1-47 (MAQRLTGEQTLDHYEDSTHASIFTYTNSNSTKGPFEGPNYHIAPRWV) the chain is Extracellular. The required for 11-cis-retinal regeneration stretch occupies residues 12-38 (DHYEDSTHASIFTYTNSNSTKGPFEGP). N-linked (GlcNAc...) asparagine glycosylation occurs at Asn29. The helical transmembrane segment at 48–72 (YHLTSTWMILVVVASVFTNGLVLAA) threads the bilayer. Topologically, residues 73–84 (TMRFKKLRHPLN) are cytoplasmic. The chain crosses the membrane as a helical span at residues 85 to 110 (WILVNLAVADLAETIIASTISVVNQI). Over 111–124 (YGYFVLGHPLCVIE) the chain is Extracellular. Cys121 and Cys198 are joined by a disulfide. A helical membrane pass occupies residues 125-144 (GYIVSLCGITGLWSLAIISW). The Cytoplasmic portion of the chain corresponds to 145–163 (ERWLVVCKPFGNVRFDAKL). A helical transmembrane segment spans residues 164–187 (ATVGIVFSWVWAAIWTAPPIFGWS). At 188–213 (RYWPYGLKTSCGPDVFSGTSYPGVQS) the chain is on the extracellular side. Residues 214–241 (YMMVLMVTCCIFPLSIIVLCYLQVWLAI) form a helical membrane-spanning segment. Over 242 to 263 (RAVAKQQKESESTQKAEKEVTR) the chain is Cytoplasmic. A helical transmembrane segment spans residues 264–287 (MVVVMVFAYCLCWGPYTFFACFAT). The Extracellular portion of the chain corresponds to 288–295 (AHPGYAFH). Residues 296 to 320 (PLVASLPSYFAKSATIYNPIIYVFM) form a helical membrane-spanning segment. Position 307 is an N6-(retinylidene)lysine (Lys307). At 321–359 (NRQFRNCILHLFGKKVDDSSELSSTSKTEVSSVSSVSPA) the chain is on the cytoplasmic side.

It belongs to the G-protein coupled receptor 1 family. Opsin subfamily. As to quaternary structure, monomer. Homodimer. Homotetramer. Post-translationally, N-glycosylated. O-glycosylated. Phosphorylated on some or all of the serine and threonine residues present in the C-terminal region. Expressed in retina (at protein level). Expressed in cone photoreceptor cells (at protein level).

Its subcellular location is the cell membrane. Functionally, visual pigments are the light-absorbing molecules that mediate vision. They consist of an apoprotein, opsin, covalently linked to cis-retinal. May increase spectral sensitivity in dim light. The chain is Medium-wave-sensitive opsin 1 (Opn1mw) from Mus musculus (Mouse).